The sequence spans 219 residues: Large ribosomal subunit protein uL16 (219 aa).

This sequence belongs to the universal ribosomal protein uL16 family. Component of the small ribosomal subunit. Mature ribosomes consist of a small (40S) and a large (60S) subunit. The 40S subunit contains about 33 different proteins and 1 molecule of RNA (18S). The 60S subunit contains about 49 different proteins and 3 molecules of RNA (25S, 5.8S and 5S).

The protein is Large ribosomal subunit protein uL16 (RPL10) of Solanum melongena (Eggplant).